We begin with the raw amino-acid sequence, 145 residues long: Basic phospholipase A2 PC17 (145 aa).

Positions Met-1–Ala-21 are cleaved as a signal peptide. Residues Ile-22 to Arg-27 constitute a propeptide that is removed on maturation. 7 disulfide bridges follow: Cys-38–Cys-98, Cys-54–Cys-144, Cys-56–Cys-72, Cys-71–Cys-125, Cys-78–Cys-118, Cys-87–Cys-111, and Cys-105–Cys-116. Ca(2+)-binding residues include Tyr-55, Gly-57, and Gly-59. His-75 is a catalytic residue. Asp-76 contributes to the Ca(2+) binding site. Asp-119 is an active-site residue.

It belongs to the phospholipase A2 family. Group I subfamily. D49 sub-subfamily. Ca(2+) is required as a cofactor. In terms of tissue distribution, expressed by the venom gland.

The protein localises to the secreted. It carries out the reaction a 1,2-diacyl-sn-glycero-3-phosphocholine + H2O = a 1-acyl-sn-glycero-3-phosphocholine + a fatty acid + H(+). Snake venom phospholipase A2 (PLA2) that inhibits neuromuscular transmission by blocking acetylcholine release from the nerve termini. PLA2 catalyzes the calcium-dependent hydrolysis of the 2-acyl groups in 3-sn-phosphoglycerides. This Laticauda colubrina (Yellow-lipped sea krait) protein is Basic phospholipase A2 PC17.